A 442-amino-acid polypeptide reads, in one-letter code: Cytochrome c biogenesis protein CcsB (442 aa).

3 helical membrane passes run 17 to 37, 76 to 96, and 162 to 182; these read LRLA…GTVI, TPWY…CTLT, and LGPI…ILGA.

Belongs to the Ccs1/CcsB family. In terms of assembly, may interact with CcsA.

It is found in the cellular thylakoid membrane. In terms of biological role, required during biogenesis of c-type cytochromes (cytochrome c6 and cytochrome f) at the step of heme attachment. This Thermosynechococcus vestitus (strain NIES-2133 / IAM M-273 / BP-1) protein is Cytochrome c biogenesis protein CcsB.